We begin with the raw amino-acid sequence, 260 residues long: UPF0246 protein Bcenmc03_2247 (260 aa).

It belongs to the UPF0246 family.

In Burkholderia orbicola (strain MC0-3), this protein is UPF0246 protein Bcenmc03_2247.